Here is a 90-residue protein sequence, read N- to C-terminus: Inactive casein kinase II subunit alpha-2 (90 aa).

Residues valine 40–valine 48 and lysine 63 contribute to the ATP site.

It belongs to the protein kinase superfamily. Ser/Thr protein kinase family. CK2 subfamily.

Functionally, the Nipponbare allele of HD6 contains a premature stop codon, resulting in a truncated non-functional product. This is Inactive casein kinase II subunit alpha-2 from Oryza sativa subsp. japonica (Rice).